The primary structure comprises 231 residues: Large ribosomal subunit protein uL1 (231 aa).

It belongs to the universal ribosomal protein uL1 family. As to quaternary structure, part of the 50S ribosomal subunit.

Functionally, binds directly to 23S rRNA. The L1 stalk is quite mobile in the ribosome, and is involved in E site tRNA release. In terms of biological role, protein L1 is also a translational repressor protein, it controls the translation of the L11 operon by binding to its mRNA. This is Large ribosomal subunit protein uL1 from Polaromonas sp. (strain JS666 / ATCC BAA-500).